The chain runs to 305 residues: NAD kinase (305 aa).

D82 functions as the Proton acceptor in the catalytic mechanism. Residues 82 to 83 (DG), 156 to 157 (ND), R184, D186, 197 to 202 (TAYALS), A221, and Q255 contribute to the NAD(+) site.

This sequence belongs to the NAD kinase family. Requires a divalent metal cation as cofactor.

Its subcellular location is the cytoplasm. It carries out the reaction NAD(+) + ATP = ADP + NADP(+) + H(+). Involved in the regulation of the intracellular balance of NAD and NADP, and is a key enzyme in the biosynthesis of NADP. Catalyzes specifically the phosphorylation on 2'-hydroxyl of the adenosine moiety of NAD to yield NADP. In Cupriavidus pinatubonensis (strain JMP 134 / LMG 1197) (Cupriavidus necator (strain JMP 134)), this protein is NAD kinase.